A 309-amino-acid chain; its full sequence is General transcription factor IIH subunit 3 (309 aa).

Residues 269–286 (CSVCLSIFCNFSPICTTC) form a C4-type zinc finger.

Belongs to the TFB4 family. As to quaternary structure, part of a TFIID-containing RNA polymerase II pre-initiation complex that is composed of TBP and at least GTF2A1, GTF2A2, GTF2E1, GTF2E2, GTF2F1, GTF2H2, GTF2H3, GTF2H4, GTF2H5, GTF2B, TCEA1, ERCC2, ERCC3, TAF1, TAF2, TAF3, TAF4, TAF5, TAF6, TAF7, TAF8, TAF9, TAF10, TAF11, TAF12 and TAF13. Component of the 7-subunit TFIIH core complex composed of XPB/ERCC3, XPD/ERCC2, GTF2H1, GTF2H2, GTF2H3, GTF2H4 and GTF2H5, which is active in NER. The core complex associates with the 3-subunit CDK-activating kinase (CAK) module composed of CCNH/cyclin H, CDK7 and MNAT1 to form the 10-subunit holoenzyme (holo-TFIIH) active in transcription. Interacts with RARA; the interaction requires prior phosphorylation of RARA on 'Ser-369' which then enhances interaction of RARA with CDK7.

The protein resides in the nucleus. In terms of biological role, component of the general transcription and DNA repair factor IIH (TFIIH) core complex, which is involved in general and transcription-coupled nucleotide excision repair (NER) of damaged DNA and, when complexed to CAK, in RNA transcription by RNA polymerase II. In NER, TFIIH acts by opening DNA around the lesion to allow the excision of the damaged oligonucleotide and its replacement by a new DNA fragment. In transcription, TFIIH has an essential role in transcription initiation. When the pre-initiation complex (PIC) has been established, TFIIH is required for promoter opening and promoter escape. Phosphorylation of the C-terminal tail (CTD) of the largest subunit of RNA polymerase II by the kinase module CAK controls the initiation of transcription. The polypeptide is General transcription factor IIH subunit 3 (Gtf2h3) (Mus musculus (Mouse)).